A 601-amino-acid polypeptide reads, in one-letter code: Glutathione-regulated potassium-efflux system protein KefB (601 aa).

13 helical membrane-spanning segments follow: residues 4–24 (ADLL…VPLA), 29–49 (IGAV…GLGF), 55–75 (EILH…GLEL), 87–107 (IFGV…GLLM), 111–131 (FLWQ…TAMA), 152–172 (VLLF…LLAG), 177–197 (HFDW…LIGG), 207–227 (FIAA…LVLS), 230–250 (LFMD…GVLL), 262–282 (AIDP…GMSL), 284–304 (LGVL…LVVI), 324–344 (MQFA…FSTA), and 356–376 (ALLL…MKGI). The region spanning 400-519 (KPQVIVVGFG…AGVTQFSRET (120 aa)) is the RCK N-terminal domain.

It belongs to the monovalent cation:proton antiporter 2 (CPA2) transporter (TC 2.A.37) family. KefB subfamily. As to quaternary structure, interacts with the regulatory subunit KefG.

Its subcellular location is the cell inner membrane. Pore-forming subunit of a potassium efflux system that confers protection against electrophiles. Catalyzes K(+)/H(+) antiport. This is Glutathione-regulated potassium-efflux system protein KefB from Salmonella enteritidis PT4 (strain P125109).